The chain runs to 339 residues: Diguanylate cyclase VdcA (339 aa).

The GGDEF domain maps to 206–339 (QQVSLIMLDI…NLGRNRVMPL (134 aa)). D214 serves as a coordination point for Mg(2+). Residues N222 and D231 each contribute to the substrate site. E257 is a binding site for Mg(2+). E257 serves as the catalytic Proton acceptor.

Mg(2+) serves as cofactor.

It catalyses the reaction 2 GTP = 3',3'-c-di-GMP + 2 diphosphate. It functions in the pathway purine metabolism; 3',5'-cyclic di-GMP biosynthesis. Its function is as follows. Diguanylate cyclase (DGC) that catalyzes the synthesis of cyclic diguanylate (c-di-GMP) via the condensation of 2 GTP molecules. Is involved in the modulation of intracellular c-di-GMP levels. Cyclic-di-GMP is a second messenger which positively regulates biofilm formation and negatively regulates virulence in V.cholerae, and is proposed to play an important role in the transition from persistence in the environment to survival in the host. Overexpression of vdcA results in increased biofilm formation, and reduced motility and virulence. The chain is Diguanylate cyclase VdcA (vdcA) from Vibrio cholerae serotype O1 (strain ATCC 39315 / El Tor Inaba N16961).